The following is a 503-amino-acid chain: Cardiolipin synthase (503 aa).

3 consecutive transmembrane segments (helical) span residues 5–25 (LNVL…RSFW), 29–49 (IVGA…IVIF), and 59–79 (LTWL…YLMF). 2 PLD phosphodiesterase domains span residues 238-265 (INYR…GDEY) and 416-443 (TRGF…DMRS). Residues histidine 243, lysine 245, aspartate 250, histidine 421, lysine 423, and aspartate 428 contribute to the active site.

The protein belongs to the phospholipase D family. Cardiolipin synthase subfamily.

Its subcellular location is the cell membrane. It carries out the reaction 2 a 1,2-diacyl-sn-glycero-3-phospho-(1'-sn-glycerol) = a cardiolipin + glycerol. Catalyzes the reversible phosphatidyl group transfer from one phosphatidylglycerol molecule to another to form cardiolipin (CL) (diphosphatidylglycerol) and glycerol. This chain is Cardiolipin synthase (cls), found in Halalkalibacterium halodurans (strain ATCC BAA-125 / DSM 18197 / FERM 7344 / JCM 9153 / C-125) (Bacillus halodurans).